The sequence spans 79 residues: UPF0180 protein Bcer98_1118 (79 aa).

The protein belongs to the UPF0180 family.

This Bacillus cytotoxicus (strain DSM 22905 / CIP 110041 / 391-98 / NVH 391-98) protein is UPF0180 protein Bcer98_1118.